A 352-amino-acid polypeptide reads, in one-letter code: Protein-glutamate methylesterase/protein-glutamine glutaminase (352 aa).

A Response regulatory domain is found at 4 to 121 (RVLIVDDSAT…YDGIDEIQKE (118 aa)). 4-aspartylphosphate is present on Asp55. One can recognise a CheB-type methylesterase domain in the interval 159-351 (AQTTNKLIAI…VKIASLLSER (193 aa)). Residues Ser171, His197, and Asp293 contribute to the active site.

The protein belongs to the CheB family. Post-translationally, phosphorylated by CheA. Phosphorylation of the N-terminal regulatory domain activates the methylesterase activity.

Its subcellular location is the cytoplasm. It carries out the reaction [protein]-L-glutamate 5-O-methyl ester + H2O = L-glutamyl-[protein] + methanol + H(+). It catalyses the reaction L-glutaminyl-[protein] + H2O = L-glutamyl-[protein] + NH4(+). Involved in chemotaxis. Part of a chemotaxis signal transduction system that modulates chemotaxis in response to various stimuli. Catalyzes the demethylation of specific methylglutamate residues introduced into the chemoreceptors (methyl-accepting chemotaxis proteins or MCP) by CheR. Also mediates the irreversible deamidation of specific glutamine residues to glutamic acid. The chain is Protein-glutamate methylesterase/protein-glutamine glutaminase from Sulfurimonas denitrificans (strain ATCC 33889 / DSM 1251) (Thiomicrospira denitrificans (strain ATCC 33889 / DSM 1251)).